The chain runs to 419 residues: O-methyltransferase desB (419 aa).

Residues 255–256 (GG), Asp-280, 306–307 (DF), and Arg-323 contribute to the S-adenosyl-L-methionine site. His-326 (proton acceptor) is an active-site residue.

This sequence belongs to the class I-like SAM-binding methyltransferase superfamily. Cation-independent O-methyltransferase family. The cofactor is S-adenosyl-L-methionine.

Its pathway is secondary metabolite biosynthesis. In terms of biological role, non-reducing polyketide synthase; part of the gene cluster that mediates the biosynthesis of the bicoumarin desertorin. The non-reducing polyketide synthase desS first catalyzes the formation of the pentaketidic 4,7-dihydroxy-5-methylcoumarin from acetyl coenzyme A and 4 malonyl coenzyme A molecules. Further O-methylation by desB leads to the formation of 7-demethylsiderin. Then, an oxidative phenol coupling catalyzed by the cytochrome P450 monooxygenase desC forms the 6,8'-dimer M-desertorin A via dimerization the monomeric precursor, 7-demethylsiderin. M-desertorin A is further converted to M-desertorin C. The sequence is that of O-methyltransferase desB from Aspergillus desertorum (Emericella desertorum).